Here is a 249-residue protein sequence, read N- to C-terminus: Aspartate/glutamate leucyltransferase (249 aa).

Belongs to the R-transferase family. Bpt subfamily.

The protein resides in the cytoplasm. It carries out the reaction N-terminal L-glutamyl-[protein] + L-leucyl-tRNA(Leu) = N-terminal L-leucyl-L-glutamyl-[protein] + tRNA(Leu) + H(+). The enzyme catalyses N-terminal L-aspartyl-[protein] + L-leucyl-tRNA(Leu) = N-terminal L-leucyl-L-aspartyl-[protein] + tRNA(Leu) + H(+). In terms of biological role, functions in the N-end rule pathway of protein degradation where it conjugates Leu from its aminoacyl-tRNA to the N-termini of proteins containing an N-terminal aspartate or glutamate. This is Aspartate/glutamate leucyltransferase from Brucella anthropi (strain ATCC 49188 / DSM 6882 / CCUG 24695 / JCM 21032 / LMG 3331 / NBRC 15819 / NCTC 12168 / Alc 37) (Ochrobactrum anthropi).